Reading from the N-terminus, the 208-residue chain is V-type ATP synthase subunit D (208 aa).

This sequence belongs to the V-ATPase D subunit family.

Produces ATP from ADP in the presence of a proton gradient across the membrane. This Chlamydia caviae (strain ATCC VR-813 / DSM 19441 / 03DC25 / GPIC) (Chlamydophila caviae) protein is V-type ATP synthase subunit D.